Here is a 352-residue protein sequence, read N- to C-terminus: Neuronal growth regulator 1 (352 aa).

The signal sequence occupies residues 1 to 35 (MVPLVRGAGGSHQWLAAVLLGLCCLLPAGRLAAPG). Ig-like C2-type domains follow at residues 36-132 (GDFP…VHLT), 137-219 (PKIF…KVTV), and 223-311 (PTIQ…LPLN). A disulfide bond links Cys-58 and Cys-116. Residues Asn-71 and Asn-153 are each glycosylated (N-linked (GlcNAc...) asparagine). 2 disulfides stabilise this stretch: Cys-158/Cys-201 and Cys-243/Cys-295. Residues Asn-273, Asn-284, Asn-292, and Asn-305 are each glycosylated (N-linked (GlcNAc...) asparagine). Gly-322 carries the GPI-anchor amidated glycine lipid modification. Positions 323 to 352 (DAEVLFSCWYLVLTLSSLTSIFYLKNIILH) are cleaved as a propeptide — removed in mature form.

It belongs to the immunoglobulin superfamily. IgLON family. Interacts with CEPU-1 and LAMP. Post-translationally, glycosylated. As to expression, expressed in embryonic retina, telencephalon, tectum, cerebellum and diencephalon (at protein level).

It localises to the cell membrane. In terms of biological role, may be involved in cell-adhesion. May participate in the regulation of neurite outgrowth in the developing brain. The protein is Neuronal growth regulator 1 (NEGR1) of Gallus gallus (Chicken).